The primary structure comprises 463 residues: ATP synthase subunit beta (463 aa).

151-158 (GGAGVGKT) serves as a coordination point for ATP.

The protein belongs to the ATPase alpha/beta chains family. F-type ATPases have 2 components, CF(1) - the catalytic core - and CF(0) - the membrane proton channel. CF(1) has five subunits: alpha(3), beta(3), gamma(1), delta(1), epsilon(1). CF(0) has three main subunits: a(1), b(2) and c(9-12). The alpha and beta chains form an alternating ring which encloses part of the gamma chain. CF(1) is attached to CF(0) by a central stalk formed by the gamma and epsilon chains, while a peripheral stalk is formed by the delta and b chains.

The protein resides in the cell membrane. It catalyses the reaction ATP + H2O + 4 H(+)(in) = ADP + phosphate + 5 H(+)(out). In terms of biological role, produces ATP from ADP in the presence of a proton gradient across the membrane. The catalytic sites are hosted primarily by the beta subunits. This Clostridium botulinum (strain Okra / Type B1) protein is ATP synthase subunit beta.